The sequence spans 209 residues: Guanylate kinase (209 aa).

The region spanning 16–198 is the Guanylate kinase-like domain; that stretch reads GRLVIISGPS…AVTEICQILL (183 aa). 23-30 is an ATP binding site; that stretch reads GPSGAGKS.

Belongs to the guanylate kinase family.

Its subcellular location is the cytoplasm. The catalysed reaction is GMP + ATP = GDP + ADP. Functionally, essential for recycling GMP and indirectly, cGMP. The polypeptide is Guanylate kinase (Rhodopirellula baltica (strain DSM 10527 / NCIMB 13988 / SH1)).